Consider the following 492-residue polypeptide: Trehalose-6-phosphate synthase (492 aa).

R25 lines the D-glucose 6-phosphate pocket. 45–46 (GG) is a binding site for UDP-alpha-D-glucose. Residues Y101 and D155 each coordinate D-glucose 6-phosphate. UDP-alpha-D-glucose is bound by residues R297 and K302. Residue R335 coordinates D-glucose 6-phosphate. Position 400–404 (400–404 (LVAKE)) interacts with UDP-alpha-D-glucose.

It belongs to the glycosyltransferase 20 family. In terms of assembly, homotetramer.

It catalyses the reaction ADP-alpha-D-glucose + D-glucose 6-phosphate = alpha,alpha-trehalose 6-phosphate + ADP + H(+). The enzyme catalyses CDP-alpha-D-glucose + D-glucose 6-phosphate = alpha,alpha-trehalose 6-phosphate + CDP + H(+). It carries out the reaction GDP-alpha-D-glucose + D-glucose 6-phosphate = alpha,alpha-trehalose 6-phosphate + GDP + H(+). The catalysed reaction is TDP-alpha-D-glucose + D-glucose 6-phosphate = 5-methyl-UDP + alpha,alpha-trehalose 6-phosphate + H(+). It catalyses the reaction D-glucose 6-phosphate + UDP-alpha-D-glucose = alpha,alpha-trehalose 6-phosphate + UDP + H(+). Its pathway is glycan biosynthesis; trehalose biosynthesis. Probably involved in the osmoprotection via the biosynthesis of trehalose and in the production of glycogen and alpha-glucan via the TreS-Pep2 branch involved in the biosynthesis of maltose-1-phosphate (M1P). Catalyzes the transfer of glucose from UDP-glucose (UDP-Glc) to D-glucose 6-phosphate (Glc-6-P) to form trehalose-6-phosphate. Probably also able to use ADP-Glc, CDP-Glc, GDP-Glc and TDP-Glc as glucosyl donors. This chain is Trehalose-6-phosphate synthase, found in Mycolicibacterium paratuberculosis (strain ATCC BAA-968 / K-10) (Mycobacterium paratuberculosis).